The primary structure comprises 945 residues: Argonaute protein wago-1 (945 aa).

The span at 1 to 20 (MSPHPPQPHPPMPPMPPVTA) shows a compositional bias: pro residues. Positions 1 to 41 (MSPHPPQPHPPMPPMPPVTAPPGAMTPMPPVPADAQKLHQS) are disordered. A PAZ domain is found at 322 to 432 (TVIQKLFDIT…FPAELMTVSR (111 aa)). Residues 636–899 (VKDGKRLTLE…PLYVANEYAK (264 aa)) form the Piwi domain.

Belongs to the Argonaute family. WAGO subfamily. In terms of assembly, interacts with rde-12. Interacts with znfx-1. Enriched in sperm and oocytes.

Its subcellular location is the cytoplasmic granule. In terms of biological role, argonaute protein which is involved in the endogenous small interfering RNA (endo-siRNA) pathway. Interacts with secondary 22G-RNAs, which are RNA-dependent RNA polymerase-derived endo-siRNAs, typically 22 nucleotides in length with a 5'guanosine residue. In the germline, functions in a genome surveillance system to silence transposons and aberrant transcripts. This is Argonaute protein wago-1 from Caenorhabditis elegans.